Here is a 323-residue protein sequence, read N- to C-terminus: tRNA dimethylallyltransferase (323 aa).

An ATP-binding site is contributed by G12 to T19. T14–T19 serves as a coordination point for substrate. Interaction with substrate tRNA stretches follow at residues D37 to L40 and Q161 to R165.

The protein belongs to the IPP transferase family. In terms of assembly, monomer. Requires Mg(2+) as cofactor.

The catalysed reaction is adenosine(37) in tRNA + dimethylallyl diphosphate = N(6)-dimethylallyladenosine(37) in tRNA + diphosphate. In terms of biological role, catalyzes the transfer of a dimethylallyl group onto the adenine at position 37 in tRNAs that read codons beginning with uridine, leading to the formation of N6-(dimethylallyl)adenosine (i(6)A). The chain is tRNA dimethylallyltransferase from Pseudomonas fluorescens (strain SBW25).